The sequence spans 1401 residues: Protein dispatched homolog 2 (1401 aa).

Disordered stretches follow at residues 1–91 and 113–138; these read MDGD…LAPA and DRAA…GTWK. Residues 170–190 form a helical membrane-spanning segment; that stretch reads VAVLMLCLAVIFLCTLAGLLG. N-linked (GlcNAc...) asparagine glycosylation occurs at N239. The tract at residues 241-264 is disordered; that stretch reads SSSHNTLRPAPRGSAQESAVRPRR. 2 N-linked (GlcNAc...) asparagine glycosylation sites follow: N349 and N465. Residues 471 to 643 enclose the SSD domain; the sequence is GMDLGLKQEL…LVWLPASAVL (173 aa). 11 helical membrane passes run 484 to 504, 510 to 530, 542 to 562, 589 to 609, 617 to 637, 704 to 724, 964 to 984, 990 to 1010, 1019 to 1039, 1064 to 1084, and 1088 to 1108; these read FLVQ…FGMA, LFLT…AFFL, FVNL…TLIF, FGYL…ASYL, CLAL…LVWL, YIWI…AGVS, PAVV…LGTW, LFSV…LVLL, ALFL…YCIS, AVGA…TVLL, and LGII…FFFQ. 3 disordered regions span residues 1169–1192, 1229–1337, and 1352–1401; these read ARRR…PSVL, PALQ…NGKR, and SLPA…GYSS. Positions 1175–1184 are enriched in polar residues; it reads SFDTSTATSK. Positions 1259 to 1270 are enriched in low complexity; sequence PLPASPEAPAHS. A compositionally biased stretch (polar residues) spans 1284-1305; sequence SSASTLEGLSVSDETCLSTSEP. The span at 1352 to 1362 shows a compositional bias: low complexity; that stretch reads SLPASHHSSLS. R1366 bears the Omega-N-methylarginine mark.

This sequence belongs to the dispatched family.

Its subcellular location is the membrane. The chain is Protein dispatched homolog 2 from Homo sapiens (Human).